The primary structure comprises 336 residues: Spore photoproduct lyase (336 aa).

The Radical SAM core domain maps to 74-305; that stretch reads CKPSANYQLP…KFGQFGYGKY (232 aa). Residues C88, C92, and C95 each coordinate [4Fe-4S] cluster. A DNA-binding region (H-T-H motif) is located at residues 215-232; sequence ESAYNILNSGYKTGFIVG.

Belongs to the radical SAM superfamily. SPL family. Monomer or homodimer. [4Fe-4S] cluster is required as a cofactor. The cofactor is S-adenosyl-L-methionine.

It carries out the reaction (5R)-5,6-dihydro-5-(thymidin-7-yl)thymidine in DNA = a thymidine dimer in DNA. Involved in repair of UV radiation-induced DNA damage during spore germination. Can repair thymine dimer 5-thyminyl-5,6-dihydrothymine (known as spore photoproduct (SP)) by in situ monomerization of SP to two thymines. In Clostridium acetobutylicum (strain ATCC 824 / DSM 792 / JCM 1419 / IAM 19013 / LMG 5710 / NBRC 13948 / NRRL B-527 / VKM B-1787 / 2291 / W), this protein is Spore photoproduct lyase (splB).